The chain runs to 207 residues: Guanylate kinase (207 aa).

In terms of domain architecture, Guanylate kinase-like spans G5–F184. Residue A12–S19 participates in ATP binding.

It belongs to the guanylate kinase family.

It localises to the cytoplasm. The catalysed reaction is GMP + ATP = GDP + ADP. Its function is as follows. Essential for recycling GMP and indirectly, cGMP. The chain is Guanylate kinase from Shewanella denitrificans (strain OS217 / ATCC BAA-1090 / DSM 15013).